The following is a 393-amino-acid chain: MLNSLDLEGRPQDTRVVVAMSGGVDSSTTAALLKAEGYDVVGITLQLYDHGAATHRKGACCAGQDIHDARDVAAKLGIPHYVLDYEDRFRESVIDNFADSYALGETPVPCIECNRSIKFRDLLKTARELGAQALATGHYVASRRLDDGSRVLVCAADADRDQSYFLFATTQEQLDYLRFPLGDMTKPETRELARRFGLAVADKHDSQDICFVPTGRYTDIITRLRPNAMDPGDIVDLDGRVLGRHNGIANFTVGQRRGLGIAAHAPLFVVRLEAANRRVVVGPREALKMHRISLRDVNWLGGGDIDSAIGNGLEMFVRVRSTRSPQPAWLRGAGGHYEIELVAGEEGVSPGQACVFYDAPSGQARVLGGGFIQSAAAKVASNPARPLVEAVRG.

ATP-binding positions include 19 to 26 (AMSGGVDS) and Leu-45. The Nucleophile role is filled by Cys-113. Cysteines 113 and 210 form a disulfide. ATP is bound at residue Gly-137. An interaction with tRNA region spans residues 160–162 (RDQ). Cys-210 acts as the Cysteine persulfide intermediate in catalysis.

The protein belongs to the MnmA/TRMU family.

It localises to the cytoplasm. The enzyme catalyses S-sulfanyl-L-cysteinyl-[protein] + uridine(34) in tRNA + AH2 + ATP = 2-thiouridine(34) in tRNA + L-cysteinyl-[protein] + A + AMP + diphosphate + H(+). Its function is as follows. Catalyzes the 2-thiolation of uridine at the wobble position (U34) of tRNA, leading to the formation of s(2)U34. The polypeptide is tRNA-specific 2-thiouridylase MnmA (Bradyrhizobium diazoefficiens (strain JCM 10833 / BCRC 13528 / IAM 13628 / NBRC 14792 / USDA 110)).